Consider the following 1522-residue polypeptide: Adhesion G protein-coupled receptor B3 (1522 aa).

Positions 1–25 (MKAVRNLLIYIFSTYLLVMFGFNAA) are cleaved as a signal peptide. The Extracellular segment spans residues 26–880 (QDFWCSTLVK…MESSGTPSVT (855 aa)). Residues 30–159 (CSTLVKGVIY…KSFFEFLVLN (130 aa)) enclose the CUB domain. Residues Asn51, Asn54, Asn82, Asn105, and Asn241 are each glycosylated (N-linked (GlcNAc...) asparagine). TSP type-1 domains follow at residues 291 to 343 (ESGV…ALCP), 345 to 398 (HGVW…ALCP), 400 to 453 (DGQW…PECT), and 455 to 508 (NGQW…QRCP). Intrachain disulfides connect Cys303-Cys336, Cys307-Cys342, Cys318-Cys326, Cys357-Cys392, Cys361-Cys397, Cys372-Cys382, Cys412-Cys447, Cys416-Cys452, Cys427-Cys437, Cys467-Cys502, Cys471-Cys507, Cys482-Cys492, Cys514-Cys549, and Cys537-Cys567. Asn337 carries N-linked (GlcNAc...) asparagine glycosylation. Asn418 is a glycosylation site (N-linked (GlcNAc...) asparagine). N-linked (GlcNAc...) asparagine glycosylation occurs at Asn540. Phosphoserine is present on Ser619. N-linked (GlcNAc...) asparagine glycans are attached at residues Asn625, Asn779, Asn812, and Asn828. The GAIN-B domain maps to 693–869 (QNSYLMTGNV…AILAQQPREI (177 aa)). 2 disulfides stabilise this stretch: Cys819–Cys851 and Cys839–Cys853. Residues 819–869 (CVLWDDSKSNESLGTWSTQGCKTVLTDASHTKCLCDRLSTFAILAQQPREI) are GPS. A helical transmembrane segment spans residues 881 to 901 (LIVGSGLSCLALITLAVVYAA). Residues 902 to 910 (LWRYIRSER) are Cytoplasmic-facing. Residues 911-931 (SIILINFCLSIISSNILILVG) traverse the membrane as a helical segment. Over 932–939 (QTQTHNKS) the chain is Extracellular. N-linked (GlcNAc...) asparagine glycosylation occurs at Asn937. Residues 940–960 (ICTTTTAFLHFFFLASFCWVL) form a helical membrane-spanning segment. Residues 961–981 (TEAWQSYMAVTGKIRTRLIRK) lie on the Cytoplasmic side of the membrane. A helical transmembrane segment spans residues 982-1002 (RFLCLGWGLPALVVATSVGFT). Residues 1003 to 1023 (RTKGYGTDHYCWLSLEGGLLY) are Extracellular-facing. The chain crosses the membrane as a helical span at residues 1024 to 1044 (AFVGPAAAVVLVNMVIGILVF). Topologically, residues 1045 to 1098 (NKLVSRDGILDKKLKHRAGQMSEPHSGLTLKCAKCGVVSTTALSATTASNAMAS) are cytoplasmic. Residues 1099-1119 (LWSSCVVLPLLALTWMSAVLA) traverse the membrane as a helical segment. At 1120-1125 (MTDKRS) the chain is on the extracellular side. A helical membrane pass occupies residues 1126–1146 (ILFQILFAVFDSLQGFVIVMV). The Cytoplasmic portion of the chain corresponds to 1147 to 1522 (HCILRREVQD…VQEGDFQTEV (376 aa)). 2 positions are modified to phosphoserine: Ser1220 and Ser1411.

This sequence belongs to the G-protein coupled receptor 2 family. Adhesion G-protein coupled receptor (ADGR) subfamily. Forms a heterodimer, consisting of a large extracellular region non-covalently linked to a seven-transmembrane moiety. Interacts (via its TSRs) with C1QL1, C1QL2, C1QL3 and C1QL4. Interacts via (C-terminus) with ELMO1, ELMO2 and ELMO3. Post-translationally, the endogenous protein is proteolytically cleaved into 2 subunits, an extracellular subunit and a seven-transmembrane subunit. In terms of tissue distribution, brain-specific expression.

It localises to the cell membrane. Its function is as follows. Receptor that plays a role in the regulation of synaptogenesis and dendritic spine formation at least partly via interaction with ELMO1 and RAC1 activity. Promotes myoblast fusion through ELMO/DOCK1. The chain is Adhesion G protein-coupled receptor B3 (Adgrb3) from Mus musculus (Mouse).